Reading from the N-terminus, the 198-residue chain is MKIDVDYAIAQYAQGLFLMADDRHGLGWYSSDRHALIPLDDQFRYPKSLQRVLNQNRFQVKINQAFTAVCEGCAARPETWISQELIEVYHTFHVAGWAHSFETWHGDRLAGGILGIAIRGAFIGESMFYTIPEASKVAMVKLVQHLRQRSYQLFDAQLQNPHLKRFGAYEVEEKAYKKQLEKALNYRCHFTSEPDLYD.

The protein belongs to the L/F-transferase family.

It is found in the cytoplasm. It carries out the reaction N-terminal L-lysyl-[protein] + L-leucyl-tRNA(Leu) = N-terminal L-leucyl-L-lysyl-[protein] + tRNA(Leu) + H(+). The enzyme catalyses N-terminal L-arginyl-[protein] + L-leucyl-tRNA(Leu) = N-terminal L-leucyl-L-arginyl-[protein] + tRNA(Leu) + H(+). The catalysed reaction is L-phenylalanyl-tRNA(Phe) + an N-terminal L-alpha-aminoacyl-[protein] = an N-terminal L-phenylalanyl-L-alpha-aminoacyl-[protein] + tRNA(Phe). Functionally, functions in the N-end rule pathway of protein degradation where it conjugates Leu, Phe and, less efficiently, Met from aminoacyl-tRNAs to the N-termini of proteins containing an N-terminal arginine or lysine. The polypeptide is Leucyl/phenylalanyl-tRNA--protein transferase (Synechocystis sp. (strain ATCC 27184 / PCC 6803 / Kazusa)).